The chain runs to 64 residues: Large ribosomal subunit protein eL37 (64 aa).

4 residues coordinate Zn(2+): C20, C23, C35, and C38. The C4-type zinc-finger motif lies at 20–38 (CRRCGRRSFHVRKKVCAAC).

This sequence belongs to the eukaryotic ribosomal protein eL37 family. Zn(2+) is required as a cofactor.

Its function is as follows. Binds to the 23S rRNA. The polypeptide is Large ribosomal subunit protein eL37 (Methanococcus maripaludis (strain C5 / ATCC BAA-1333)).